The chain runs to 164 residues: R-phycoerythrin alpha chain (164 aa).

Residues Asn-47, Lys-81, Cys-82, Arg-84, His-88, Arg-137, Cys-139, and Arg-142 each coordinate (2R,3E)-phycoerythrobilin.

This sequence belongs to the phycobiliprotein family. As to quaternary structure, heterododecamer of 6 alpha and 6 beta chains. The basic functional unit of phycobiliproteins is a ring-shaped hexamer formed from two back-to-back trimers contacting via the alpha chain subunits. The trimers are composed of alpha/beta subunit heterodimers arranged around a three-fold axis of symmetry. The phycoerythrins also contain a gamma subunit which is located in the center of the hexamer. Contains two covalently linked phycoerythrobilin chromophores.

The protein resides in the plastid. The protein localises to the chloroplast thylakoid membrane. Functionally, light-harvesting photosynthetic tetrapyrrole chromophore-protein from the phycobiliprotein complex. The chain is R-phycoerythrin alpha chain (cpeA) from Griffithsia monilis (Red alga).